The primary structure comprises 1033 residues: MGKENYELYSVELGTGPGGDMAAKMSKKKAGGGGGKKKEKLENMKKEMEMNDHQLSVSELEQKYQTSATKGLKASLAAELLLRDGPNALRPPRGTPEYVKFARQLAGGLQCLMWVAAAICLIAFAIQASEGDLTTDDNLYLALALIAVVVVTGCFGYYQEFKSTNIIASFKNLVPQQATVIRDGDKFQINADQLVVGDLVEMKGGDRVPADIRILSAQGCKVDNSSLTGESEPQTRSPECTHESPLETRNIAFFSTMCLEGTAQGLVVSTGDRTIIGRIASLASGVENEKTPIAIEIEHFVDIIAGLAILFGATFFVVAMCIGYTFLRAMVFFMAIVVAYVPEGLLATVTVCLSLTAKRLASKNCVVKNLEAVETLGSTSVICSDKTGTLTQNRMTVSHLWFDNHIHTADTTEDQSGQTFDQSSETWRALCRVLTLCNRAAFKSGQDAVPVPKRIVIGDASETALLKFSELTLGNAMGYRDRFPKVCEIPFNSTNKFQLSIHTLEDPRDPRHLLVMKGAPERVLERCSSILIKGQELPLDEQWREAFQTAYLSLGGLGERVLGFCQLYLNEKDYPPGYTFDVEAMNFPSSGLCFAGLVSMIDPPRATVPDAVLKCRTAGIRVIMVTGDHPITAKAIAASVGIISEGSETVEDIAARLRMPVDQVNKKDARACVINGMQLKDMDPSELVEALRTHPEMVFARTSPQQKLVIVESCQRLGAIVAVTGDGVNDSPALKKADIGVAMGIAGSDAAKNAADMILLDDNFASIVTGVEQGRLIFDNLKKSIAYTLTKNIPELTPYLIYITVSVPLPLGCITILFIELCTDIFPSVSLAYEKAESDIMHLRPRNPRRDRLVNEPLAAYSYFQIGAIQSFAGFADYFTAMAQEGWFPLLCVGLRPQWEDHHLQDLQDSYGQEWTFGQRLYQQYTCYTVFFISIEMCQIADVLIRKTRRLSAFQQGFFRNRILVIAIVFQVCIGCFLCYCPGMPNIFNFMPIRFQWWLVPMPFGLLIFVYDEIRKLGVRCCPGSWWDQELYY.

The Cytoplasmic portion of the chain corresponds to 1–96; it reads MGKENYELYS…NALRPPRGTP (96 aa). A phosphotyrosine mark is found at Y6 and Y9. Residues 14 to 39 are disordered; that stretch reads GTGPGGDMAAKMSKKKAGGGGGKKKE. Over residues 25 to 38 the composition is skewed to basic residues; that stretch reads MSKKKAGGGGGKKK. Residue S26 is modified to Phosphoserine. The helical transmembrane segment at 97 to 117 threads the bilayer; the sequence is EYVKFARQLAGGLQCLMWVAA. The Lumenal segment spans residues 118-140; that stretch reads AICLIAFAIQASEGDLTTDDNLY. A helical membrane pass occupies residues 141 to 161; the sequence is LALALIAVVVVTGCFGYYQEF. The Cytoplasmic segment spans residues 162-297; sequence KSTNIIASFK…NEKTPIAIEI (136 aa). A helical membrane pass occupies residues 298–317; that stretch reads EHFVDIIAGLAILFGATFFV. The Lumenal segment spans residues 318-329; sequence VAMCIGYTFLRA. A helical transmembrane segment spans residues 330–347; sequence MVFFMAIVVAYVPEGLLA. The K(+) site is built by V338, A339, V341, and E343. Topologically, residues 348–781 are cytoplasmic; that stretch reads TVTVCLSLTA…EQGRLIFDNL (434 aa). The 4-aspartylphosphate intermediate role is filled by D385. Positions 385 and 387 each coordinate Mg(2+). Phosphoserine occurs at positions 461 and 599. Residues D726 and D730 each contribute to the Mg(2+) site. Residues 782–801 form a helical membrane-spanning segment; it reads KKSIAYTLTKNIPELTPYLI. E795 provides a ligand contact to K(+). Residues 802-811 are Lumenal-facing; that stretch reads YITVSVPLPL. A helical membrane pass occupies residues 812 to 832; that stretch reads GCITILFIELCTDIFPSVSLA. E820 provides a ligand contact to K(+). The Cytoplasmic segment spans residues 833 to 852; it reads YEKAESDIMHLRPRNPRRDR. The residue at position 838 (S838) is a Phosphoserine. A helical transmembrane segment spans residues 853-875; that stretch reads LVNEPLAAYSYFQIGAIQSFAGF. The Lumenal segment spans residues 876 to 927; sequence ADYFTAMAQEGWFPLLCVGLRPQWEDHHLQDLQDSYGQEWTFGQRLYQQYTC. The chain crosses the membrane as a helical span at residues 928–947; the sequence is YTVFFISIEMCQIADVLIRK. The Cytoplasmic segment spans residues 948 to 961; that stretch reads TRRLSAFQQGFFRN. Position 952 is a phosphoserine; by PKA (S952). The helical transmembrane segment at 962 to 980 threads the bilayer; that stretch reads RILVIAIVFQVCIGCFLCY. Residues 981–995 are Lumenal-facing; that stretch reads CPGMPNIFNFMPIRF. The chain crosses the membrane as a helical span at residues 996–1016; that stretch reads QWWLVPMPFGLLIFVYDEIRK. The Cytoplasmic portion of the chain corresponds to 1017 to 1033; sequence LGVRCCPGSWWDQELYY.

The protein belongs to the cation transport ATPase (P-type) (TC 3.A.3) family. Type IIC subfamily. As to quaternary structure, the gastric H(+)/K(+) ATPase pump is composed of the catalytic alpha subunit ATP4A and the regulatory beta subunit ATP4B. Interacts (via the P-domain) with ATP4B (via N-terminus); this interaction stabilizes the lumenal-open E2 conformation state and prevents the reverse reaction of the transport cycle.

It localises to the apical cell membrane. The catalysed reaction is K(+)(out) + ATP + H2O + H(+)(in) = K(+)(in) + ADP + phosphate + 2 H(+)(out). Functionally, the catalytic subunit of the gastric H(+)/K(+) ATPase pump which transports H(+) ions in exchange for K(+) ions across the apical membrane of parietal cells. Uses ATP as an energy source to pump H(+) ions to the gastric lumen while transporting K(+) ion from the lumen into the cell. Remarkably generates a million-fold proton gradient across the gastric parietal cell membrane, acidifying the gastric juice down to pH 1. Within a transport cycle, the transfer of a H(+) ion across the membrane is coupled to ATP hydrolysis and is associated with a transient phosphorylation that shifts the pump conformation from inward-facing (E1) to outward-facing state (E2). The release of the H(+) ion in the stomach lumen is followed by binding of K(+) ion converting the pump conformation back to the E1 state. The polypeptide is Potassium-transporting ATPase alpha chain 1 (Atp4a) (Rattus norvegicus (Rat)).